The following is an 897-amino-acid chain: DNA endonuclease RBBP8 (897 aa).

Residues 22 to 45 (DLWTKLKECHDREVQGLQVKVTKL) are essential for binding to the MRN complex and for RPA focus formation on DNA damage. A coiled-coil region spans residues 35-84 (VQGLQVKVTKLKQERILDAQRLEEFFTKNQQLREQQKVLHETIKVLEDRL). The required for interaction with LMO4, probably by stabilizing the interaction through RPPB8 dimerization stretch occupies residues 45 to 160 (LKQERILDAQ…AELECEEDVI (116 aa)). Glycyl lysine isopeptide (Lys-Gly) (interchain with G-Cter in SUMO2) cross-links involve residues K62 and K115. Positions 117 to 138 (ITELMNERNTLQEENKKLSEQL) form a coiled coil. Residue K193 forms a Glycyl lysine isopeptide (Lys-Gly) (interchain with G-Cter in SUMO2) linkage. S233 and S276 each carry phosphoserine. Residues 292-307 (KQPFEESTRNTEDSLR) show a composition bias toward basic and acidic residues. Residues 292–325 (KQPFEESTRNTEDSLRFSDSTSKTPPQEELPTRV) are disordered. The residue at position 315 (T315) is a Phosphothreonine; by CDK2. Residues S326, S327, and S349 each carry the phosphoserine modification. Glycyl lysine isopeptide (Lys-Gly) (interchain with G-Cter in SUMO2) cross-links involve residues K360 and K378. Position 379 is a phosphoserine (S379). Glycyl lysine isopeptide (Lys-Gly) (interchain with G-Cter in SUMO2) cross-links involve residues K396, K404, and K410. The segment at 419–464 (QNRTEYGKDSNTDKHLEPLKSLGGRTSKRKKTEEESEHEVSCPQAS) is disordered. The span at 420–436 (NRTEYGKDSNTDKHLEP) shows a compositional bias: basic and acidic residues. Glycyl lysine isopeptide (Lys-Gly) (interchain with G-Cter in SUMO2) cross-links involve residues K438 and K449. A PXDLS motif motif is present at residues 490–494 (PLDLS). The interval 509–557 (SETSKNKFRQVTLYEALKTIPKGFSSSRKASDGNCTLPKDSPGEPCSQE) is damage-recruitment motif. A Glycyl lysine isopeptide (Lys-Gly) (interchain with G-Cter in SUMO2); alternate cross-link involves residue K526. Glycyl lysine isopeptide (Lys-Gly) (interchain with G-Cter in SUMO2) cross-links involve residues K530, K572, and K578. K604 is covalently cross-linked (Glycyl lysine isopeptide (Lys-Gly) (interchain with G-Cter in SUMO2); alternate). Glycyl lysine isopeptide (Lys-Gly) (interchain with G-Cter in SUMO2) cross-links involve residues K613, K638, and K640. A required for interaction with LMO4, probably by making physical contact with LMO4 region spans residues 641 to 685 (SLQNNQDVSFENIQWSIDPGADLSQYKMDVTVIDTKDGSQSKLGG). S664 is subject to Phosphoserine; by ATM. Residue K676 forms a Glycyl lysine isopeptide (Lys-Gly) (interchain with G-Cter in SUMO2) linkage. S679 bears the Phosphoserine mark. The interval 704 to 723 (KKQEQKGEKSSNEERKMNDS) is disordered. Residue K719 forms a Glycyl lysine isopeptide (Lys-Gly) (interchain with G-Cter in SUMO2) linkage. The residue at position 723 (S723) is a Phosphoserine. S745 is subject to Phosphoserine; by ATM. A Glycyl lysine isopeptide (Lys-Gly) (interchain with G-Cter in SUMO2) cross-link involves residue K782. The KLHL15-binding motif lies at 840 to 842 (FRY). The residue at position 847 (T847) is a Phosphothreonine; by CDK1. Phosphothreonine; by ATR is present on T859. K869 participates in a covalent cross-link: Glycyl lysine isopeptide (Lys-Gly) (interchain with G-Cter in SUMO2). Positions 873-897 (DPCPRPKRRQPYNAIFSPKGKEQKT) are disordered.

Belongs to the COM1/SAE2/CtIP family. As to quaternary structure, homotetramer; formed by antiparallel association of helical extensions protruding from the N-termini of two parallel coiled-coil dimers. Forms a dumbbell-shaped particle in which polar globular domains are held about 30 nm apart by a central rod. Homotetramerization is required for DNA-end resection and repair. Interacts (via the PXDLS motif) with CTBP1; the interaction is disrupted via binding of the adenovirus E1A to CTBP1. Component of the BRCA1-RBBP8 complex. Interacts (the Ser-327 phosphorylated form) with BRCA1 (via the C-terminal BRCT domains): the interaction occurs in the G2 phase, ubiquitinates RBBP8 and involves RBBP8 in BRCA1-dependent G2/M checkpoint control on DNA damage. Interacts with RB1. Interacts with the MRN complex; interacts directly with MRE11; the interaction is required for efficient homologous recombination (HR) and regulation of the MRN complex. Interacts directly with RAD50. Interacts (when phosphorylated by CDK1) with NBN; promoting association with the MRN complex. Interacts with LM04 (via the LIM zinc-binding 1 domain). Interacts with SIAH1. Interacts with RNF138. Interacts with EXD2. Interacts with CUL3 and KLHL15; this interaction leads to RBBP8 proteasomal degradation. Directly interacts with PIN1; this interaction depends upon RBBP8 phosphorylation, predominantly at Thr-315. Interacts with FZR1; this interaction leads to APC/C-mediated RBBP8 proteasomal degradation. Interacts with AUNIP; leading to recruitment of RBBP8 to sites of DNA damage. Interacts with SAMHD1. Interacts with HDGFL2. Post-translationally, hyperphosphorylation upon ionizing radiation results in dissociation from BRCA1. Phosphorylation at Thr-847 by CDK1 is essential for the recruitment to DNA and the DNA repair function. Phosphorylation at Thr-847 and Thr-859 promote interaction with NBN and recruitment to double-strand breaks (DSBs). Phosphorylated on Ser-327 as cells enter G2 phase. This phosphorylation is required for binding BRCA1 and for the G2/M DNA damage transition checkpoint control. Phosphorylation at Thr-315, probably catalyzed by CDK2, is required for PIN1-binding, while phosphorylation at Ser-276 serves as a PIN1 isomerization site. Phosphorylation at Thr-315 is cell-cycle dependent. It steadily increases during S phase, peaks at late S/G2 phase, and drops at G1. Phosphorylation is not required for tetramerization. Binds to DNA more strongly when dephosphorylated. In terms of processing, ubiquitinated. Ubiquitination at multiple sites by BRCA1 (via its N-terminal RING domain) does not lead to its proteasomal degradation but instead the ubiquitinated RBBP8 binds to chromatin following DNA damage and may play a role in G2/M checkpoint control. Ubiquitinated by RNF138 at its N-terminus. Ubiquitinated through 'Lys-48' by the E3 CUL3-KLHL15 complex; this modification leads to proteasomal degradation. Ubiquitinated by the E3 FZR1/APC/C complex; this modification leads to proteasomal degradation. In terms of tissue distribution, expressed in ER-positive breast cancer lines, but tends to be down-regulated ER-negative cells (at protein level).

The protein localises to the nucleus. It is found in the chromosome. Functionally, endonuclease that cooperates with the MRE11-RAD50-NBN (MRN) complex in DNA-end resection, the first step of double-strand break (DSB) repair through the homologous recombination (HR) pathway. HR is restricted to S and G2 phases of the cell cycle and preferentially repairs DSBs resulting from replication fork collapse. Key determinant of DSB repair pathway choice, as it commits cells to HR by preventing classical non-homologous end-joining (NHEJ). Specifically promotes the endonuclease activity of the MRN complex to clear DNA ends containing protein adducts: recruited to DSBs by NBN following phosphorylation by CDK1, and promotes the endonuclease activity of MRE11 to clear protein-DNA adducts and generate clean double-strand break ends. Functions downstream of the MRN complex and ATM, promotes ATR activation and its recruitment to DSBs in the S/G2 phase facilitating the generation of ssDNA. Component of the BRCA1-RBBP8 complex that regulates CHEK1 activation and controls cell cycle G2/M checkpoints on DNA damage. During immunoglobulin heavy chain class-switch recombination, promotes microhomology-mediated alternative end joining (A-NHEJ) and plays an essential role in chromosomal translocations. Binds preferentially to DNA Y-junctions and to DNA substrates with blocked ends and promotes intermolecular DNA bridging. This is DNA endonuclease RBBP8 (RBBP8) from Homo sapiens (Human).